The chain runs to 77 residues: Large ribosomal subunit protein bL28 (77 aa).

Belongs to the bacterial ribosomal protein bL28 family.

The chain is Large ribosomal subunit protein bL28 from Albidiferax ferrireducens (strain ATCC BAA-621 / DSM 15236 / T118) (Rhodoferax ferrireducens).